Here is a 134-residue protein sequence, read N- to C-terminus: Large ribosomal subunit protein bL20 (134 aa).

This sequence belongs to the bacterial ribosomal protein bL20 family.

Functionally, binds directly to 23S ribosomal RNA and is necessary for the in vitro assembly process of the 50S ribosomal subunit. It is not involved in the protein synthesizing functions of that subunit. The chain is Large ribosomal subunit protein bL20 from Sinorhizobium fredii (strain NBRC 101917 / NGR234).